Reading from the N-terminus, the 159-residue chain is Cytochrome c-type biogenesis protein CcmE (159 aa).

Residues M1–R23 are Cytoplasmic-facing. The helical; Signal-anchor for type II membrane protein transmembrane segment at L24–A44 threads the bilayer. At L45 to K159 the chain is on the periplasmic side. Residues H138 and Y142 each coordinate heme.

The protein belongs to the CcmE/CycJ family.

The protein resides in the cell inner membrane. Functionally, heme chaperone required for the biogenesis of c-type cytochromes. Transiently binds heme delivered by CcmC and transfers the heme to apo-cytochromes in a process facilitated by CcmF and CcmH. This is Cytochrome c-type biogenesis protein CcmE from Bartonella henselae (strain ATCC 49882 / DSM 28221 / CCUG 30454 / Houston 1) (Rochalimaea henselae).